The primary structure comprises 127 residues: Large ribosomal subunit protein bL21c (127 aa).

It belongs to the bacterial ribosomal protein bL21 family. As to quaternary structure, part of the 50S ribosomal subunit.

Its subcellular location is the plastid. It localises to the chloroplast. This protein binds to 23S rRNA. This is Large ribosomal subunit protein bL21c from Adiantum capillus-veneris (Maidenhair fern).